Reading from the N-terminus, the 478-residue chain is Sodium-coupled neutral amino acid transporter 5 (478 aa).

The segment at 1–20 is disordered; the sequence is MAISSAEGMELQDPKMNGAL. At 1–57 the chain is on the cytoplasmic side; that stretch reads MAISSAEGMELQDPKMNGALPGNAVEQEHEGFLPSHSPSPGRKPAQFMDFEGKTSFG. A helical transmembrane segment spans residues 58–80; sequence MSVFNLSNAIMGSGILGLAYAMA. The Extracellular portion of the chain corresponds to 81–93; sequence HTGILLFLALLLC. A helical transmembrane segment spans residues 94–114; that stretch reads IALLSSYSIHLLLTCAGVVGI. Residues 115–131 are Cytoplasmic-facing; sequence RAYEQLGQRALGPAGKV. A helical membrane pass occupies residues 132–152; it reads VVAAVICLHNVGAMSSYLFII. At 153-172 the chain is on the extracellular side; sequence KSELPLVIATFLDMDPEGDW. Residues 173–193 form a helical membrane-spanning segment; sequence FLKGNLLIIIVSVLIILPLAL. The Cytoplasmic portion of the chain corresponds to 194-198; that stretch reads MRHLG. The helical transmembrane segment at 199 to 219 threads the bilayer; that stretch reads YLGYTSGLSLTCMLFFLISVI. Residues 220–263 are Extracellular-facing; that stretch reads YKKFQLGCTVGHNGTAVESKSSPSLPIHGLNTSCEAQMFTADSQ. C227 and C253 form a disulfide bridge. N232 carries an N-linked (GlcNAc...) asparagine glycan. Residues 264-284 traverse the membrane as a helical segment; it reads MFYTVPIMAFAFVCHPEVLPI. The Cytoplasmic segment spans residues 285 to 301; sequence YTELCRPSKRRMQAVAN. Residues 302–322 traverse the membrane as a helical segment; it reads VSIGAMFCMYGLTATFGYLTF. At 323-340 the chain is on the extracellular side; it reads YSSVEAEMLHMYSQHDLL. A helical membrane pass occupies residues 341 to 361; sequence ILCVRLAVLLAVTLTVPVVLF. At 362-382 the chain is on the cytoplasmic side; the sequence is PIRRALQQLLFPSKAFSWPRH. Residues 383–403 form a helical membrane-spanning segment; sequence VAIALILLVLVNVLVICVPTI. Residues 404–405 are Extracellular-facing; sequence RD. Residues 406–426 traverse the membrane as a helical segment; it reads IFGVIGSTSAPSLIFILPSIF. Topologically, residues 427–445 are cytoplasmic; the sequence is YLRIVPSEVEPLYSWPKIQ. The helical transmembrane segment at 446–466 threads the bilayer; that stretch reads ALCFGVLGVLFMAISLGFMFA. Over 467–478 the chain is Extracellular; it reads NWATGQSHVSGH.

This sequence belongs to the amino acid/polyamine transporter 2 family.

The protein localises to the cell membrane. It carries out the reaction L-serine(out) + Na(+)(out) + H(+)(in) = L-serine(in) + Na(+)(in) + H(+)(out). The enzyme catalyses L-alanine(out) + Na(+)(out) + H(+)(in) = L-alanine(in) + Na(+)(in) + H(+)(out). The catalysed reaction is glycine(out) + Na(+)(out) + H(+)(in) = glycine(in) + Na(+)(in) + H(+)(out). It catalyses the reaction L-glutamine(out) + Na(+)(out) + H(+)(in) = L-glutamine(in) + Na(+)(in) + H(+)(out). It carries out the reaction L-asparagine(out) + Na(+)(out) + H(+)(in) = L-asparagine(in) + Na(+)(in) + H(+)(out). The enzyme catalyses L-histidine(out) + Na(+)(out) + H(+)(in) = L-histidine(in) + Na(+)(in) + H(+)(out). The catalysed reaction is L-cysteine(out) + Na(+)(out) + H(+)(in) = L-cysteine(in) + Na(+)(in) + H(+)(out). With respect to regulation, not inhibited by lithium. Partial allosteric regulation on ions sodium binding. Functionally, symporter that cotransports neutral amino acids and sodium ions, coupled to an H(+) antiporter activity. Releases L-glutamine and glycine from astroglial cells and may participate in the glutamate/GABA-glutamine cycle and the NMDA receptors activation. In addition contributes significantly to L-glutamine uptake in retina, namely in ganglion and Mueller cells and, therefore participates in the retinal glutamate-glutamine cycle. The transport activity is pH sensitive, Li(+) tolerant, bidirectional and associated with large uncoupled fluxes of protons. The transport is electroneutral coupled to the cotransport of 1 Na(+) and the antiport of 1 H(+). May have particular importance for modulation of net hepatic glutamine flux. This Bos taurus (Bovine) protein is Sodium-coupled neutral amino acid transporter 5.